We begin with the raw amino-acid sequence, 352 residues long: Putative formin-like protein 15b (352 aa).

Residues 1–350 (MTLFNFIKLF…KDAKEAEMEK (350 aa)) form the FH2 domain.

It belongs to the formin-like family. Class-II subfamily.

The protein is Putative formin-like protein 15b (FH15B) of Arabidopsis thaliana (Mouse-ear cress).